Consider the following 780-residue polypeptide: Cullin-5 (780 aa).

Residue Ser-34 is modified to Phosphoserine. Thr-210 carries the phosphothreonine modification. Positions 713–772 constitute a Cullin neddylation domain; sequence LRTRKLYIQIMKMRKKISNAQLQTELVEILKNMFLPQKKMIKEQIEWLIEHKYIRRDESD. A Glycyl lysine isopeptide (Lys-Gly) (interchain with G-Cter in NEDD8) cross-link involves residue Lys-724.

It belongs to the cullin family. As to quaternary structure, component of multiple cullin-5-RING E3 ubiquitin-protein ligase complexes (ECS complexes, also named CRL5 complexes) formed of CUL5, Elongin BC (ELOB and ELOC), RNF7/RBX2 and a variable SOCS box domain-containing protein as substrate-specific recognition component. CUL5-containing ECS complexes specifically contain RNF7/RBX2, and not RBX1, as catalytic subunit. Component of the ECS(ASB2) complex with the substrate recognition component ASB2. Component of the ECS(ASB6) complex with the substrate recognition component ASB6. Component of the ECS(ASB7) complex with the substrate recognition component ASB7. Component of the ECS(ASB9) complex with the substrate recognition component ASB9. Component of the ECS(ASB11) complex with the substrate recognition component ASB11. Component of the ECS(ASB12) complex with the substrate recognition component ASB12. Component of the ECS(LRRC41) complex with the substrate recognition component LRRC41. Component of the ECS(SOCS1) complex with the substrate recognition component SOCS1. Component of the ECS(SOCS2) complex with the substrate recognition component SOCS2. Component of the ECS(WSB1) complex with the substrate recognition subunit WSB1. Component of the ECS(SOCS3) complex with the substrate recognition component SOCS3. Component of the ECS(SOCS7) complex with the substrate recognition component SOCS7. Component of the ECS(SPSB1) complex with the substrate recognition component SPSB1. Component of the ECS(SPSB3) complex with the substrate recognition component SPSB3. Component of the ECS(SPSB2) complex with the substrate recognition component SPSB2. Component of the ECS(SPSB4) complex with the substrate recognition component SPSB4. Component of the ECS(RAB40) complex with the substrate recognition subunit RAB40A, RAB40B or RAB40C. Component of the ECS(KLHDC1) complex with the substrate recognition component KLHDC1. Component of the ECS(PCMTD1) complex with the substrate recognition subunit PCMTD1. May also form complexes containing RBX1 and ELOA or VHL; additional evidence is however required to confirm this result in vivo. Interacts (when neddylated) with ARIH2; leading to activate the E3 ligase activity of ARIH2. Interacts with ERCC6; the interaction is induced by DNA damaging agents or inhibitors of RNA polymerase II elongation. Interacts with ELOA (via the BC-box). Interacts (unneddylated form) with DCUN1D1, DCUN1D2, DCUN1D3, DCUN1D4 and DCUN1D5; these interactions promote the cullin neddylation. Neddylated; which enhances the ubiquitination activity of ECS complexes and prevents binding of the inhibitor CAND1. Deneddylated via its interaction with the COP9 signalosome (CSN). As to expression, kidney collecting tubules.

It is found in the nucleus. Its pathway is protein modification; protein ubiquitination. In terms of biological role, core component of multiple cullin-5-RING E3 ubiquitin-protein ligase complexes (ECS complexes, also named CRL5 complexes), which mediate the ubiquitination and subsequent proteasomal degradation of target proteins. Acts a scaffold protein that contributes to catalysis through positioning of the substrate and the ubiquitin-conjugating enzyme. The functional specificity of the E3 ubiquitin-protein ligase complex depends on the variable SOCS box-containing substrate recognition component. Acts as a key regulator of neuron positioning during cortex development: component of various SOCS-containing ECS complexes, such as the ECS(SOCS7) complex, that regulate reelin signaling by mediating ubiquitination and degradation of DAB1. ECS(SOCS1) seems to direct ubiquitination of JAK2. The ECS(SOCS2) complex mediates the ubiquitination and subsequent proteasomal degradation of phosphorylated EPOR and GHR. The ECS(SPSB3) complex catalyzes ubiquitination of nuclear CGAS. ECS(KLHDC1) complex is part of the DesCEND (destruction via C-end degrons) pathway and mediates ubiquitination and degradation of truncated SELENOS selenoprotein produced by failed UGA/Sec decoding, which ends with a glycine. The ECS(ASB9) complex mediates ubiquitination and degradation of CKB. As part of some ECS complex, promotes 'Lys-11'-linked ubiquitination and degradation of BTRC. As part of a multisubunit ECS complex, polyubiquitinates monoubiquitinated POLR2A. As part of the ECS(RAB40C) complex, mediates ANKRD28 ubiquitination and degradation, thereby regulating protein phosphatase 6 (PP6) complex activity and focal adhesion assembly during cell migration. As part of the ECS(RAB40A) complex, mediates RHOU 'Lys-48'-linked ubiquitination and degradation, thus inhibiting focal adhesion disassembly during cell migration. As part of the ECS(RAB40B) complex, mediates LIMA1/EPLIN and RAP2 ubiquitination, thereby regulating actin cytoskeleton dynamics and stress fiber formation during cell migration. May form a cell surface vasopressin receptor. The polypeptide is Cullin-5 (CUL5) (Oryctolagus cuniculus (Rabbit)).